A 315-amino-acid polypeptide reads, in one-letter code: 2-oxoglutarate and iron-dependent oxygenase domain-containing protein 3 (315 aa).

The interval 1 to 31 is disordered; it reads MAPQRRGPPRIPEGSSAAERRRATSTKKDRL. Topologically, residues 1-41 are cytoplasmic; sequence MAPQRRGPPRIPEGSSAAERRRATSTKKDRLPREAQRTWLR. Residues 18-31 show a composition bias toward basic and acidic residues; that stretch reads AERRRATSTKKDRL. A helical; Signal-anchor for type II membrane protein membrane pass occupies residues 42–62; the sequence is IVAFGVGLALVTCLLWSSVGI. At 63–315 the chain is on the lumenal side; the sequence is DDDVAEVVAR…DHGIEDPVLT (253 aa). In terms of domain architecture, Fe2OG dioxygenase spans 203–305; sequence KPTFFSRINS…AITIAFTCNP (103 aa). The N-linked (GlcNAc...) asparagine glycan is linked to Asn211. Positions 226 and 228 each coordinate Fe cation. N-linked (GlcNAc...) asparagine glycosylation occurs at Asn263. His284 serves as a coordination point for Fe cation. Arg294 is an active-site residue. Position 294 (Arg294) interacts with 2-oxoglutarate.

This sequence belongs to the OGFOD3 family. Requires Fe(2+) as cofactor. It depends on L-ascorbate as a cofactor.

It localises to the membrane. The chain is 2-oxoglutarate and iron-dependent oxygenase domain-containing protein 3 (Ogfod3) from Mus musculus (Mouse).